Here is an 81-residue protein sequence, read N- to C-terminus: Small ribosomal subunit protein bS18A (81 aa).

This sequence belongs to the bacterial ribosomal protein bS18 family. Part of the 30S ribosomal subunit. Forms a tight heterodimer with protein bS6.

Its function is as follows. Binds as a heterodimer with protein bS6 to the central domain of the 16S rRNA, where it helps stabilize the platform of the 30S subunit. This is Small ribosomal subunit protein bS18A from Saccharopolyspora erythraea (strain ATCC 11635 / DSM 40517 / JCM 4748 / NBRC 13426 / NCIMB 8594 / NRRL 2338).